The following is a 623-amino-acid chain: tRNA uridine 5-carboxymethylaminomethyl modification enzyme MnmG (623 aa).

12–17 contacts FAD; it reads GAGHAG. 272–286 serves as a coordination point for NAD(+); it reads GPRYCPSIEDKINRF.

The protein belongs to the MnmG family. In terms of assembly, homodimer. Heterotetramer of two MnmE and two MnmG subunits. Requires FAD as cofactor.

Its subcellular location is the cytoplasm. Functionally, NAD-binding protein involved in the addition of a carboxymethylaminomethyl (cmnm) group at the wobble position (U34) of certain tRNAs, forming tRNA-cmnm(5)s(2)U34. The sequence is that of tRNA uridine 5-carboxymethylaminomethyl modification enzyme MnmG from Christiangramia forsetii (strain DSM 17595 / CGMCC 1.15422 / KT0803) (Gramella forsetii).